Reading from the N-terminus, the 390-residue chain is DNA primase small subunit PriS (390 aa).

Catalysis depends on residues aspartate 98, aspartate 100, and aspartate 296.

The protein belongs to the eukaryotic-type primase small subunit family. In terms of assembly, heterodimer of a small subunit (PriS) and a large subunit (PriL). Mg(2+) serves as cofactor. It depends on Mn(2+) as a cofactor.

In terms of biological role, catalytic subunit of DNA primase, an RNA polymerase that catalyzes the synthesis of short RNA molecules used as primers for DNA polymerase during DNA replication. The small subunit contains the primase catalytic core and has DNA synthesis activity on its own. Binding to the large subunit stabilizes and modulates the activity, increasing the rate of DNA synthesis while decreasing the length of the DNA fragments, and conferring RNA synthesis capability. The DNA polymerase activity may enable DNA primase to also catalyze primer extension after primer synthesis. May also play a role in DNA repair. The polypeptide is DNA primase small subunit PriS (Methanococcoides burtonii (strain DSM 6242 / NBRC 107633 / OCM 468 / ACE-M)).